A 225-amino-acid chain; its full sequence is UPF0173 metal-dependent hydrolase Aflv_0488 (225 aa).

This sequence belongs to the UPF0173 family.

The protein is UPF0173 metal-dependent hydrolase Aflv_0488 of Anoxybacillus flavithermus (strain DSM 21510 / WK1).